We begin with the raw amino-acid sequence, 113 residues long: Large ribosomal subunit protein uL24 (113 aa).

Belongs to the universal ribosomal protein uL24 family. As to quaternary structure, part of the 50S ribosomal subunit.

In terms of biological role, one of two assembly initiator proteins, it binds directly to the 5'-end of the 23S rRNA, where it nucleates assembly of the 50S subunit. One of the proteins that surrounds the polypeptide exit tunnel on the outside of the subunit. This chain is Large ribosomal subunit protein uL24, found in Chlamydia abortus (strain DSM 27085 / S26/3) (Chlamydophila abortus).